Consider the following 608-residue polypeptide: Extracellular metalloproteinase 5 (608 aa).

The signal sequence occupies residues 1–20; it reads MHGLLLAAAGLLSLPLHVIA. A propeptide spanning residues 21-244 is cleaved from the precursor; the sequence is HPQPSTNLAG…VHNVVDYVSH (224 aa). Residue N285 is glycosylated (N-linked (GlcNAc...) asparagine). H427 provides a ligand contact to Zn(2+). Residue E428 is part of the active site. H431 serves as a coordination point for Zn(2+). N-linked (GlcNAc...) asparagine glycosylation occurs at N591.

This sequence belongs to the peptidase M36 family. The cofactor is Zn(2+).

It is found in the secreted. Functionally, secreted metalloproteinase probably acting as a virulence factor. The chain is Extracellular metalloproteinase 5 (MEP5) from Trichophyton tonsurans (Scalp ringworm fungus).